The primary structure comprises 95 residues: Protein RnfH (95 aa).

It belongs to the UPF0125 (RnfH) family.

This chain is Protein RnfH, found in Erwinia tasmaniensis (strain DSM 17950 / CFBP 7177 / CIP 109463 / NCPPB 4357 / Et1/99).